The chain runs to 396 residues: Acetylornithine aminotransferase 2 (396 aa).

Pyridoxal 5'-phosphate contacts are provided by residues 102-103 and phenylalanine 134; that span reads GA. A N(2)-acetyl-L-ornithine-binding site is contributed by arginine 137. Pyridoxal 5'-phosphate is bound at residue 219–222; it reads DEVQ. Lysine 248 bears the N6-(pyridoxal phosphate)lysine mark. Threonine 276 contributes to the pyridoxal 5'-phosphate binding site.

It belongs to the class-III pyridoxal-phosphate-dependent aminotransferase family. ArgD subfamily. Homodimer. Pyridoxal 5'-phosphate serves as cofactor.

It is found in the cytoplasm. The catalysed reaction is N(2)-acetyl-L-ornithine + 2-oxoglutarate = N-acetyl-L-glutamate 5-semialdehyde + L-glutamate. It participates in amino-acid biosynthesis; L-arginine biosynthesis; N(2)-acetyl-L-ornithine from L-glutamate: step 4/4. In Bordetella parapertussis (strain 12822 / ATCC BAA-587 / NCTC 13253), this protein is Acetylornithine aminotransferase 2.